The chain runs to 183 residues: D-glycero-alpha-D-manno-heptose-1,7-bisphosphate 7-phosphatase (183 aa).

Residues Cys-93, His-95, Cys-108, and Cys-110 each coordinate Zn(2+).

The protein belongs to the GmhB family.

The protein resides in the cytoplasm. It catalyses the reaction D-glycero-alpha-D-manno-heptose 1,7-bisphosphate + H2O = D-glycero-alpha-D-manno-heptose 1-phosphate + phosphate. It functions in the pathway nucleotide-sugar biosynthesis; GDP-D-glycero-alpha-D-manno-heptose biosynthesis; GDP-D-glycero-alpha-D-manno-heptose from D-glycero-alpha-D-manno-heptose 7-phosphate: step 2/3. Converts the D-glycero-alpha-D-manno-heptose 1,7-bisphosphate intermediate into D-glycero-alpha-D-manno-heptose 1-phosphate by removing the phosphate group at the C-7 position. In Photorhabdus laumondii subsp. laumondii (strain DSM 15139 / CIP 105565 / TT01) (Photorhabdus luminescens subsp. laumondii), this protein is D-glycero-alpha-D-manno-heptose-1,7-bisphosphate 7-phosphatase (gmhB2).